The following is a 370-amino-acid chain: Phospho-N-acetylmuramoyl-pentapeptide-transferase (370 aa).

11 helical membrane passes run 21–41 (PTSI…DLFI), 46–66 (LLVP…WGII), 92–112 (PSMG…LFAL), 117–137 (FSKQ…IGLI), 151–171 (LSVK…LVLI), 181–201 (ILIF…IALF), 217–237 (DGLA…ELII), 243–263 (NYAI…FLIF), 270–290 (VFMG…VALL), 298–318 (LIMG…VGVF), and 349–369 (TIIV…AIML).

It belongs to the glycosyltransferase 4 family. MraY subfamily. It depends on Mg(2+) as a cofactor.

It localises to the cell inner membrane. It catalyses the reaction UDP-N-acetyl-alpha-D-muramoyl-L-alanyl-gamma-D-glutamyl-meso-2,6-diaminopimeloyl-D-alanyl-D-alanine + di-trans,octa-cis-undecaprenyl phosphate = di-trans,octa-cis-undecaprenyl diphospho-N-acetyl-alpha-D-muramoyl-L-alanyl-D-glutamyl-meso-2,6-diaminopimeloyl-D-alanyl-D-alanine + UMP. It functions in the pathway cell wall biogenesis; peptidoglycan biosynthesis. Catalyzes the initial step of the lipid cycle reactions in the biosynthesis of the cell wall peptidoglycan: transfers peptidoglycan precursor phospho-MurNAc-pentapeptide from UDP-MurNAc-pentapeptide onto the lipid carrier undecaprenyl phosphate, yielding undecaprenyl-pyrophosphoryl-MurNAc-pentapeptide, known as lipid I. This chain is Phospho-N-acetylmuramoyl-pentapeptide-transferase, found in Prochlorococcus marinus (strain SARG / CCMP1375 / SS120).